Reading from the N-terminus, the 149-residue chain is Angiogenin (149 aa).

The N-terminal stretch at 1–24 (MVMGLGPLVLIFVLGLGVTPPTLA) is a signal peptide. A Pyrrolidone carboxylic acid modification is found at Gln25. Catalysis depends on His37, which acts as the Proton acceptor. Arg45 is a tRNA binding site. 3 disulfides stabilise this stretch: Cys50–Cys105, Cys63–Cys116, and Cys81–Cys131. A Nucleolar localization signal motif is present at residues 55-59 (KRRDL). TRNA is bound by residues Cys105 and Ile127. The Proton donor role is filled by His138.

It belongs to the pancreatic ribonuclease family. As to quaternary structure, homodimer. Interacts with RNH1; inhibiting ANG ribonuclease activity. Interacts with PCNA.

The protein resides in the secreted. Its subcellular location is the nucleus. It localises to the nucleolus. It is found in the cytoplasm. The protein localises to the stress granule. Its activity is regulated as follows. Has weak tRNA ribonuclease activity by itself due to partial autoinhibition by its C-terminus, which folds into a short alpha-helix that partially occludes the substrate-binding site. In absence of stress, the ribonuclease activity is inhibited by RNH1 in the cytoplasm. In response to stress, dissociates from RNH1 in the cytoplasm and associates with cytoplasmic ribosomes with vacant A-sites: ribosomes directly activate the tRNA ribonuclease activity of ANG by refolding the C-terminal alpha-helix. In response to stress, the angiogenic activity of ANG is inhibited by RNH1 in the nucleus. In terms of biological role, secreted ribonuclease that can either promote or restrict cell proliferation of target cells, depending on the context. Endocytosed in target cells via its receptor PLXNB2 and translocates to the cytoplasm or nucleus. Under stress conditions, localizes to the cytoplasm and promotes the assembly of stress granules (SGs): specifically cleaves a subset of tRNAs within anticodon loops to produce tRNA-derived stress-induced fragments (tiRNAs), resulting in translation repression and inhibition of cell proliferation. tiRNas also prevent formation of apoptosome, thereby promoting cell survival. Preferentially cleaves RNAs between a pyrimidine and an adenosine residue, suggesting that it cleaves the anticodon loop of tRNA(Ala) (32-UUAGCAU-38) after positions 33 and 36. Cleaves a subset of tRNAs, including tRNA(Ala), tRNA(Glu), tRNA(Gly), tRNA(Lys), tRNA(Val), tRNA(His), tRNA(Asp) and tRNA(Sec). Under growth conditions and in differentiated cells, translocates to the nucleus and stimulates ribosomal RNA (rRNA) transcription, including that containing the initiation site sequences of 45S rRNA, thereby promoting cell growth and proliferation. Angiogenin induces vascularization of normal and malignant tissues via its ability to promote rRNA transcription. Involved in hematopoietic stem and progenitor cell (HSPC) growth and survival by promoting rRNA transcription in growth conditions and inhibiting translation in response to stress, respectively. Mediates the crosstalk between myeloid and intestinal epithelial cells to protect the intestinal epithelial barrier integrity: secreted by myeloid cells and promotes intestinal epithelial cells proliferation and survival. Also mediates osteoclast-endothelial cell crosstalk in growing bone: produced by osteoclasts and protects the neighboring vascular cells against senescence by promoting rRNA transcription. In Oryctolagus cuniculus (Rabbit), this protein is Angiogenin (ANG).